The primary structure comprises 202 residues: Small ribosomal subunit protein uS4 (202 aa).

The interval Leu-15 to Arg-42 is disordered. An S4 RNA-binding domain is found at Ser-90–Asn-152.

It belongs to the universal ribosomal protein uS4 family. In terms of assembly, part of the 30S ribosomal subunit. Contacts protein S5. The interaction surface between S4 and S5 is involved in control of translational fidelity.

In terms of biological role, one of the primary rRNA binding proteins, it binds directly to 16S rRNA where it nucleates assembly of the body of the 30S subunit. With S5 and S12 plays an important role in translational accuracy. The chain is Small ribosomal subunit protein uS4 from Synechococcus sp. (strain CC9902).